Here is a 572-residue protein sequence, read N- to C-terminus: Hemagglutinin-neuraminidase (572 aa).

The Intravirion portion of the chain corresponds to 1 to 31; the sequence is MEYWKHTNHGKDAGNELETSMATHGNKLTNK. The chain crosses the membrane as a helical span at residues 32 to 52; that stretch reads ITYILWTIILVLLSIVFIIVL. At 53–572 the chain is on the virion surface side; that stretch reads INSIKSEKAH…FKTEIPKSCS (520 aa). 2 disulfides stabilise this stretch: C190-C214 and C256-C269. Positions 252 to 257 are involved in neuraminidase activity; sequence NRKSCS. N-linked (GlcNAc...) asparagine; by host glycans are attached at residues N308 and N351. 2 cysteine pairs are disulfide-bonded: C355-C469 and C463-C473. N523 carries an N-linked (GlcNAc...) asparagine; by host glycan. An intrachain disulfide couples C535 to C544.

Belongs to the paramyxoviruses hemagglutinin-neuraminidase family. As to quaternary structure, homotetramer; composed of disulfide-linked homodimers. Interacts with F protein trimer.

Its subcellular location is the virion membrane. It is found in the host cell membrane. It carries out the reaction Hydrolysis of alpha-(2-&gt;3)-, alpha-(2-&gt;6)-, alpha-(2-&gt;8)- glycosidic linkages of terminal sialic acid residues in oligosaccharides, glycoproteins, glycolipids, colominic acid and synthetic substrates.. Its function is as follows. Attaches the virus to sialic acid-containing cell receptors and thereby initiating infection. Binding of HN protein to the receptor induces a conformational change that allows the F protein to trigger virion/cell membranes fusion. Functionally, neuraminidase activity ensures the efficient spread of the virus by dissociating the mature virions from the neuraminic acid containing glycoproteins. The protein is Hemagglutinin-neuraminidase (HN) of Homo sapiens (Human).